The primary structure comprises 386 residues: Phosphoglycerate kinase (386 aa).

Residues 21 to 23, Arg-36, 59 to 62, Arg-113, and Arg-146 contribute to the substrate site; these read DLN and HLGR. Residues Lys-197, Glu-314, and 340–343 each bind ATP; that span reads GGDT.

The protein belongs to the phosphoglycerate kinase family. As to quaternary structure, monomer.

Its subcellular location is the cytoplasm. The catalysed reaction is (2R)-3-phosphoglycerate + ATP = (2R)-3-phospho-glyceroyl phosphate + ADP. Its pathway is carbohydrate degradation; glycolysis; pyruvate from D-glyceraldehyde 3-phosphate: step 2/5. The chain is Phosphoglycerate kinase from Azotobacter vinelandii (strain DJ / ATCC BAA-1303).